We begin with the raw amino-acid sequence, 589 residues long: Kelch-like protein 25 (589 aa).

Residues 46–114 enclose the BTB domain; sequence TDVTLWAGDR…AYSSRIAINE (69 aa). Residues 149–250 form the BACK domain; sequence CLGMMLLSDA…LPSDCLQEAV (102 aa). 6 Kelch repeats span residues 296–340, 341–388, 389–444, 446–492, 494–538, and 539–585; these read TLLI…AIGC, KVYV…ELEN, CLYV…SAKL, LFVF…VLGS, IFIM…ASGN, and KLYV…STWK.

In terms of assembly, component of the BCR(KLHL25) E3 ubiquitin ligase complex, at least composed of CUL3, KLHL25 and RBX1.

It participates in protein modification; protein ubiquitination. In terms of biological role, substrate-specific adapter of a BCR (BTB-CUL3-RBX1) E3 ubiquitin ligase complex involved in various processes, such as translation homeostasis and lipid synthesis. The BCR(KLHL25) ubiquitin ligase complex acts by mediating ubiquitination of hypophosphorylated EIF4EBP1 (4E-BP1): ubiquitination and subsequent degradation of hypophosphorylated EIF4EBP1 (4E-BP1) probably serves as a homeostatic mechanism to maintain translation and prevent eIF4E inhibition when eIF4E levels are low. The BCR(KLHL25) complex does not target EIF4EBP1 (4E-BP1) when it is hyperphosphorylated or associated with eIF4E. The BCR(KLHL25) complex also acts as a regulator of lipid synthesis by mediating ubiquitination and degradation of ACLY, thereby inhibiting lipid synthesis. BCR(KLHL25)-mediated degradation of ACLY promotes fatty acid oxidation and is required for differentiation of inducible regulatory T (iTreg) cells. The protein is Kelch-like protein 25 of Homo sapiens (Human).